Consider the following 111-residue polypeptide: MGKLTLLLLILLGWLQYSLWLGKNGIHDYVRVKDDVVVQQGNNAKLKDRNEQLFAEIDDLNGGQEAIEERARNELGMIKPGESFYRLVPESNHRNANTPSSTNTSSNNTQR.

The Cytoplasmic portion of the chain corresponds to 1 to 3 (MGK). A helical transmembrane segment spans residues 4 to 21 (LTLLLLILLGWLQYSLWL). Residues 22–111 (GKNGIHDYVR…TNTSSNNTQR (90 aa)) are Periplasmic-facing. A coiled-coil region spans residues 33-63 (KDDVVVQQGNNAKLKDRNEQLFAEIDDLNGG). The interval 88 to 111 (VPESNHRNANTPSSTNTSSNNTQR) is disordered. Over residues 97-111 (NTPSSTNTSSNNTQR) the composition is skewed to low complexity.

Belongs to the FtsB family. In terms of assembly, part of a complex composed of FtsB, FtsL and FtsQ.

The protein localises to the cell inner membrane. Its function is as follows. Essential cell division protein. May link together the upstream cell division proteins, which are predominantly cytoplasmic, with the downstream cell division proteins, which are predominantly periplasmic. The sequence is that of Cell division protein FtsB from Pectobacterium atrosepticum (strain SCRI 1043 / ATCC BAA-672) (Erwinia carotovora subsp. atroseptica).